The chain runs to 724 residues: Membrane protein YdfJ (724 aa).

Transmembrane regions (helical) follow at residues 17 to 37 (IKAICAWIVVLVAAIGLAVTL), 179 to 199 (IVGIILAFVVLAITFGSLLIA), 200 to 220 (GLPILTALIGLGVSIGLVLIG), 231 to 251 (LSLAGMIGLAVGIDYALFIFT), 277 to 297 (AVVFAGLTVIVALCGLTVVNI), 309 to 329 (LSVLMAVLASITLVPAVLSIA), 360 to 380 (IMLSVCSILILIVISIPSMHL), 512 to 532 (AIPVFAVLIVGFAFVLLTIVF), 539 to 559 (LVAVAGFMLTMTATLGICVFV), 575 to 595 (GPILAFLPILSIGILFGLAMD), 627 to 647 (PVVTAAGLIMIFVFAGFIFAG), and 655 to 675 (GLALSFGVLFDAFIVRMTLIP).

It belongs to the resistance-nodulation-cell division (RND) (TC 2.A.6) family. MmpL subfamily.

It localises to the cell membrane. The chain is Membrane protein YdfJ (ydfJ) from Bacillus subtilis (strain 168).